The following is a 227-amino-acid chain: 2,3-bisphosphoglycerate-dependent phosphoglycerate mutase (227 aa).

Substrate-binding positions include 8–15 (RHGKSVWN), 21–22 (TG), arginine 58, 110–113 (ERMY), lysine 121, 137–138 (RR), and 181–182 (GN). Histidine 9 serves as the catalytic Tele-phosphohistidine intermediate. The active-site Proton donor/acceptor is glutamate 110.

It belongs to the phosphoglycerate mutase family. BPG-dependent PGAM subfamily.

The catalysed reaction is (2R)-2-phosphoglycerate = (2R)-3-phosphoglycerate. The protein operates within carbohydrate degradation; glycolysis; pyruvate from D-glyceraldehyde 3-phosphate: step 3/5. Functionally, catalyzes the interconversion of 2-phosphoglycerate and 3-phosphoglycerate. In Chlamydia caviae (strain ATCC VR-813 / DSM 19441 / 03DC25 / GPIC) (Chlamydophila caviae), this protein is 2,3-bisphosphoglycerate-dependent phosphoglycerate mutase.